A 264-amino-acid chain; its full sequence is 3-methyl-2-oxobutanoate hydroxymethyltransferase (264 aa).

2 residues coordinate Mg(2+): Asp45 and Asp84. Residues 45-46 (DS), Asp84, and Lys112 each bind 3-methyl-2-oxobutanoate. Residue Glu114 coordinates Mg(2+). Glu181 acts as the Proton acceptor in catalysis.

This sequence belongs to the PanB family. Homodecamer; pentamer of dimers. Mg(2+) is required as a cofactor.

It is found in the cytoplasm. The enzyme catalyses 3-methyl-2-oxobutanoate + (6R)-5,10-methylene-5,6,7,8-tetrahydrofolate + H2O = 2-dehydropantoate + (6S)-5,6,7,8-tetrahydrofolate. It participates in cofactor biosynthesis; (R)-pantothenate biosynthesis; (R)-pantoate from 3-methyl-2-oxobutanoate: step 1/2. Its function is as follows. Catalyzes the reversible reaction in which hydroxymethyl group from 5,10-methylenetetrahydrofolate is transferred onto alpha-ketoisovalerate to form ketopantoate. This is 3-methyl-2-oxobutanoate hydroxymethyltransferase from Vibrio campbellii (strain ATCC BAA-1116).